A 2108-amino-acid chain; its full sequence is Mycocerosic acid synthase-like polyketide synthase (2108 aa).

The signal sequence occupies residues 1 to 23 (MGKERTKTVDRTRVTPVAVIGMG). Cys-24 carries N-palmitoyl cysteine lipidation. Cys-24 carries S-diacylglycerol cysteine lipidation. In terms of domain architecture, Ketosynthase family 3 (KS3) spans 24 to 436 (CRLPGGIDSP…GTNVHAIVEQ (413 aa)). Cys-185 serves as the catalytic Acyl-thioester intermediate; for beta-ketoacyl synthase activity. Catalysis depends on for beta-ketoacyl synthase activity residues His-320 and His-356. The segment at 438-542 (PVPAPESGAP…PYPPAVGQDD (105 aa)) is linker domain (LD). The tract at residues 543-842 (RGPVWVFSGQ…AAALAGMRRE (300 aa)) is acyltransferase (AT). Ser-634 functions as the Acyl-ester intermediate; for acyltransferase activity in the catalytic mechanism. The tract at residues 900-1184 (NTVAVHPLLG…LAVRGLQLGT (285 aa)) is dehydratase (DH). Positions 905-1025 (HPLLGSHVRL…AVLHVVREAD (121 aa)) are N-terminal hotdog fold. The 287-residue stretch at 905–1191 (HPLLGSHVRL…LGTGASQASE (287 aa)) folds into the PKS/mFAS DH domain. His-938 serves as the catalytic Proton acceptor; for dehydratase activity. The segment at 1044–1191 (PHKVDGAEVR…LGTGASQASE (148 aa)) is C-terminal hotdog fold. Asp-1108 acts as the Proton donor; for dehydratase activity in catalysis. A pseudo beta-ketoacyl reductase (PsiKR) region spans residues 1220-1391 (AWLLISTCDA…SGEDETAWRN (172 aa)). The enoylreductase (ER) stretch occupies residues 1419–1743 (AGMRLQIRTP…EHTGKLILDV (325 aa)). The interval 1765–2004 (GSYIITGGLG…HSPFAEKFQS (240 aa)) is beta-ketoacyl reductase (KR). Residues 1773–1776 (LGGL), 1796–1799 (SRSQ), 1824–1825 (DI), and 1897–1898 (FS) each bind NADP(+). Residues 2025–2101 (EEWPDRLRRL…DLMCDKLAAD (77 aa)) enclose the Carrier domain. Residue Ser-2060 is modified to O-(pantetheine 4'-phosphoryl)serine.

As to quaternary structure, homodimer.

It localises to the cell membrane. It participates in lipid metabolism; fatty acid biosynthesis. Its function is as follows. Polyketide synthase likely involved in the biosynthesis of a polymethyl-branched fatty acid (PMB-FA) that might only be produced during host infection. Is required for the full virulence of M.tuberculosis during host infection. The polypeptide is Mycocerosic acid synthase-like polyketide synthase (Mycobacterium tuberculosis (strain ATCC 25618 / H37Rv)).